A 480-amino-acid polypeptide reads, in one-letter code: uncharacterized protein (480 aa).

A signal peptide spans 1–21 (MSRYFSFFFLALFLHYRIIVA). Disordered regions lie at residues 38 to 72 (SSHL…SAEC) and 116 to 147 (SPLI…NDQT). Over residues 51–60 (LTQSHSSLSD) the composition is skewed to low complexity. Positions 133 to 144 (LKTSSEAQGDTN) are enriched in polar residues. The helical transmembrane segment at 153-173 (YAVEIACVCFLIALAINYFVG) threads the bilayer. The disordered stretch occupies residues 404 to 480 (QARNKTESGR…VPKMKMSRSH (77 aa)). Residues 407–465 (NKTESGRQKAAEEAYKELHNARQEALQKKKAEKKKMMEEAEAKMSAEVIRKKEAKERAR) show a composition bias toward basic and acidic residues. A coiled-coil region spans residues 411 to 467 (SGRQKAAEEAYKELHNARQEALQKKKAEKKKMMEEAEAKMSAEVIRKKEAKERARQV). Residues 466–480 (QVKKAVPKMKMSRSH) are compositionally biased toward basic residues.

It is found in the membrane. This is an uncharacterized protein from Arabidopsis thaliana (Mouse-ear cress).